The following is a 496-amino-acid chain: Glutamyl-tRNA(Gln) amidotransferase subunit A (496 aa).

Residues lysine 79 and serine 159 each act as charge relay system in the active site. The active-site Acyl-ester intermediate is the serine 183.

Belongs to the amidase family. GatA subfamily. As to quaternary structure, heterotrimer of A, B and C subunits.

It carries out the reaction L-glutamyl-tRNA(Gln) + L-glutamine + ATP + H2O = L-glutaminyl-tRNA(Gln) + L-glutamate + ADP + phosphate + H(+). Its function is as follows. Allows the formation of correctly charged Gln-tRNA(Gln) through the transamidation of misacylated Glu-tRNA(Gln) in organisms which lack glutaminyl-tRNA synthetase. The reaction takes place in the presence of glutamine and ATP through an activated gamma-phospho-Glu-tRNA(Gln). The chain is Glutamyl-tRNA(Gln) amidotransferase subunit A from Bartonella quintana (strain Toulouse) (Rochalimaea quintana).